A 281-amino-acid chain; its full sequence is NAD kinase (281 aa).

Aspartate 61 acts as the Proton acceptor in catalysis. Residues 61–62 (DG), 134–135 (ND), arginine 145, aspartate 164, 175–180 (TAYSLS), and glutamine 234 contribute to the NAD(+) site.

It belongs to the NAD kinase family. Requires a divalent metal cation as cofactor.

Its subcellular location is the cytoplasm. It catalyses the reaction NAD(+) + ATP = ADP + NADP(+) + H(+). Its function is as follows. Involved in the regulation of the intracellular balance of NAD and NADP, and is a key enzyme in the biosynthesis of NADP. Catalyzes specifically the phosphorylation on 2'-hydroxyl of the adenosine moiety of NAD to yield NADP. The chain is NAD kinase from Clostridium botulinum (strain ATCC 19397 / Type A).